A 924-amino-acid polypeptide reads, in one-letter code: Isoleucine--tRNA ligase (924 aa).

The short motif at 58–68 (PYANGQIHVGH) is the 'HIGH' region element. Glu561 provides a ligand contact to L-isoleucyl-5'-AMP. A 'KMSKS' region motif is present at residues 602–606 (KMSKS). Lys605 serves as a coordination point for ATP. The Zn(2+) site is built by Cys887, Cys890, Cys907, and Cys910.

It belongs to the class-I aminoacyl-tRNA synthetase family. IleS type 1 subfamily. In terms of assembly, monomer. Zn(2+) is required as a cofactor.

The protein localises to the cytoplasm. It catalyses the reaction tRNA(Ile) + L-isoleucine + ATP = L-isoleucyl-tRNA(Ile) + AMP + diphosphate. In terms of biological role, catalyzes the attachment of isoleucine to tRNA(Ile). As IleRS can inadvertently accommodate and process structurally similar amino acids such as valine, to avoid such errors it has two additional distinct tRNA(Ile)-dependent editing activities. One activity is designated as 'pretransfer' editing and involves the hydrolysis of activated Val-AMP. The other activity is designated 'posttransfer' editing and involves deacylation of mischarged Val-tRNA(Ile). The chain is Isoleucine--tRNA ligase from Dichelobacter nodosus (strain VCS1703A).